We begin with the raw amino-acid sequence, 138 residues long: MIIGIGTDIVEIDRINKSIERTPNFINKLFTKKEIEYFISRKMRPEFIAGKFAAKESVAKALGTGFRKFGFRDIEIDKDELGKPLVHLSGGAKETANKFGDYKLHLSISHGRENAIAYAILEVDNNGNCNSSKDEGHR.

Positions 8 and 56 each coordinate Mg(2+).

It belongs to the P-Pant transferase superfamily. AcpS family. Requires Mg(2+) as cofactor.

It is found in the cytoplasm. It carries out the reaction apo-[ACP] + CoA = holo-[ACP] + adenosine 3',5'-bisphosphate + H(+). Its function is as follows. Transfers the 4'-phosphopantetheine moiety from coenzyme A to a Ser of acyl-carrier-protein. The sequence is that of Holo-[acyl-carrier-protein] synthase from Clostridium novyi (strain NT).